The following is a 501-amino-acid chain: Lysine--tRNA ligase (501 aa).

Glu411 and Glu418 together coordinate Mg(2+).

This sequence belongs to the class-II aminoacyl-tRNA synthetase family. In terms of assembly, homodimer. The cofactor is Mg(2+).

It is found in the cytoplasm. The enzyme catalyses tRNA(Lys) + L-lysine + ATP = L-lysyl-tRNA(Lys) + AMP + diphosphate. The chain is Lysine--tRNA ligase from Aliivibrio salmonicida (strain LFI1238) (Vibrio salmonicida (strain LFI1238)).